We begin with the raw amino-acid sequence, 198 residues long: Probable thymidylate kinase (198 aa).

7–14 (GIDGAGKS) contacts ATP.

The protein belongs to the thymidylate kinase family.

It catalyses the reaction dTMP + ATP = dTDP + ADP. The chain is Probable thymidylate kinase from Methanocorpusculum labreanum (strain ATCC 43576 / DSM 4855 / Z).